A 236-amino-acid chain; its full sequence is Phosphoribosylaminoimidazole-succinocarboxamide synthase (236 aa).

The protein belongs to the SAICAR synthetase family.

It carries out the reaction 5-amino-1-(5-phospho-D-ribosyl)imidazole-4-carboxylate + L-aspartate + ATP = (2S)-2-[5-amino-1-(5-phospho-beta-D-ribosyl)imidazole-4-carboxamido]succinate + ADP + phosphate + 2 H(+). Its pathway is purine metabolism; IMP biosynthesis via de novo pathway; 5-amino-1-(5-phospho-D-ribosyl)imidazole-4-carboxamide from 5-amino-1-(5-phospho-D-ribosyl)imidazole-4-carboxylate: step 1/2. This is Phosphoribosylaminoimidazole-succinocarboxamide synthase from Pseudomonas putida (strain GB-1).